The primary structure comprises 265 residues: Mlc titration factor A (265 aa).

Residues histidine 111, histidine 148, histidine 152, and glutamate 211 each contribute to the Zn(2+) site.

Belongs to the MtfA family. Interacts with Mlc. Zn(2+) is required as a cofactor.

It is found in the cytoplasm. In terms of biological role, involved in the modulation of the activity of the glucose-phosphotransferase system (glucose-PTS). Interacts with the transcriptional repressor Mlc, preventing its interaction with DNA and leading to the modulation of expression of genes regulated by Mlc, including ptsG, which encodes the PTS system glucose-specific EIICB component. Shows zinc-dependent metallopeptidase activity. The sequence is that of Mlc titration factor A from Escherichia coli O8 (strain IAI1).